A 399-amino-acid chain; its full sequence is Nicotinate phosphoribosyltransferase (399 aa).

Residue His-221 is modified to Phosphohistidine; by autocatalysis.

Belongs to the NAPRTase family. In terms of processing, transiently phosphorylated on a His residue during the reaction cycle. Phosphorylation strongly increases the affinity for substrates and increases the rate of nicotinate D-ribonucleotide production. Dephosphorylation regenerates the low-affinity form of the enzyme, leading to product release.

It catalyses the reaction nicotinate + 5-phospho-alpha-D-ribose 1-diphosphate + ATP + H2O = nicotinate beta-D-ribonucleotide + ADP + phosphate + diphosphate. Its pathway is cofactor biosynthesis; NAD(+) biosynthesis; nicotinate D-ribonucleotide from nicotinate: step 1/1. Functionally, catalyzes the synthesis of beta-nicotinate D-ribonucleotide from nicotinate and 5-phospho-D-ribose 1-phosphate at the expense of ATP. The polypeptide is Nicotinate phosphoribosyltransferase (Buchnera aphidicola subsp. Acyrthosiphon pisum (strain 5A)).